The chain runs to 118 residues: Large ribosomal subunit protein bL20 (118 aa).

This sequence belongs to the bacterial ribosomal protein bL20 family.

Its function is as follows. Binds directly to 23S ribosomal RNA and is necessary for the in vitro assembly process of the 50S ribosomal subunit. It is not involved in the protein synthesizing functions of that subunit. This is Large ribosomal subunit protein bL20 from Acidiphilium cryptum (strain JF-5).